A 521-amino-acid chain; its full sequence is Probable protein kinase UbiB (521 aa).

The 379-residue stretch at 119–497 (QFDETPIASA…QKRTNRLLQT (379 aa)) folds into the Protein kinase domain. Residues 125–133 (IASASIAQV) and Lys151 contribute to the ATP site. Asp286 (proton acceptor) is an active-site residue. The chain crosses the membrane as a helical span at residues 496-516 (QTIIYGGIGFVLGLLAMQLLV).

It belongs to the ABC1 family. UbiB subfamily.

It is found in the cell inner membrane. It participates in cofactor biosynthesis; ubiquinone biosynthesis [regulation]. Is probably a protein kinase regulator of UbiI activity which is involved in aerobic coenzyme Q (ubiquinone) biosynthesis. The chain is Probable protein kinase UbiB from Variovorax paradoxus (strain S110).